Consider the following 290-residue polypeptide: UPF0761 membrane protein YihY (290 aa).

A run of 6 helical transmembrane segments spans residues 44–64 (LLSL…FPMF), 104–124 (VGAC…DSAL), 140–160 (FAVY…SLAI), 183–203 (ILPL…VPTT), 210–230 (ALVG…GFAL), and 244–264 (VLAV…IVLL).

The protein belongs to the UPF0761 family.

It localises to the cell inner membrane. The protein is UPF0761 membrane protein YihY of Salmonella paratyphi B (strain ATCC BAA-1250 / SPB7).